Consider the following 111-residue polypeptide: NADH-ubiquinone oxidoreductase chain 3 (111 aa).

3 helical membrane passes run 1 to 21, 56 to 76, and 84 to 104; these read MLVLVMVVLFTLVLLFVFYIG, FFIMMLMFVIFDLEVVMFLGI, and LISFFMLLMFIFGGFYMEWWY.

The protein belongs to the complex I subunit 3 family.

The protein localises to the mitochondrion membrane. It catalyses the reaction a ubiquinone + NADH + 5 H(+)(in) = a ubiquinol + NAD(+) + 4 H(+)(out). In terms of biological role, core subunit of the mitochondrial membrane respiratory chain NADH dehydrogenase (Complex I) that is believed to belong to the minimal assembly required for catalysis. Complex I functions in the transfer of electrons from NADH to the respiratory chain. The immediate electron acceptor for the enzyme is believed to be ubiquinone. The polypeptide is NADH-ubiquinone oxidoreductase chain 3 (ND3) (Ascaris suum (Pig roundworm)).